The sequence spans 222 residues: Type II restriction enzyme AbrI (222 aa).

Disordered stretches follow at residues 21–45 (GNRE…RRDR) and 161–222 (NQRR…SPRI). The segment covering 22–42 (NREKARQKQQESGKPDQGERR) has biased composition (basic and acidic residues). Residues 188 to 202 (SSASGSSRSSFTPRP) are compositionally biased toward low complexity.

The protein belongs to the XhoI type II restriction endonuclease family.

The enzyme catalyses Endonucleolytic cleavage of DNA to give specific double-stranded fragments with terminal 5'-phosphates.. Its function is as follows. A P subtype restriction enzyme that recognizes the double-stranded sequence 5'-CTCGAG-3' and cleaves after C-1. In Azospirillum brasilense, this protein is Type II restriction enzyme AbrI (abrIR).